The primary structure comprises 876 residues: Translation initiation factor IF-2 (876 aa).

A disordered region spans residues 164–288 (VEIKEPEEPA…EEPAPHAFSA (125 aa)). Residues 179–219 (AAPVAGPEAVPVAPETPSAAPGETVAAVEAEAAPSQPASTE) show a composition bias toward low complexity. Residues 244-259 (VWKEEKVEKRGLKTRG) are compositionally biased toward basic and acidic residues. The region spanning 378 to 547 (ARAPVVTVMG…LLQAEVLELK (170 aa)) is the tr-type G domain. The G1 stretch occupies residues 387 to 394 (GHVDHGKT). 387–394 (GHVDHGKT) serves as a coordination point for GTP. Positions 412 to 416 (GITQH) are G2. A G3 region spans residues 433 to 436 (DTPG). GTP is bound by residues 433–437 (DTPGH) and 487–490 (TKID). The tract at residues 487–490 (TKID) is G4. The G5 stretch occupies residues 523 to 525 (SAK).

The protein belongs to the TRAFAC class translation factor GTPase superfamily. Classic translation factor GTPase family. IF-2 subfamily.

The protein localises to the cytoplasm. Functionally, one of the essential components for the initiation of protein synthesis. Protects formylmethionyl-tRNA from spontaneous hydrolysis and promotes its binding to the 30S ribosomal subunits. Also involved in the hydrolysis of GTP during the formation of the 70S ribosomal complex. In Nitrosospira multiformis (strain ATCC 25196 / NCIMB 11849 / C 71), this protein is Translation initiation factor IF-2.